Reading from the N-terminus, the 207-residue chain is Guanylate kinase (207 aa).

Positions glycine 4–arginine 184 constitute a Guanylate kinase-like domain. Position 11–18 (alanine 11–serine 18) interacts with ATP.

Belongs to the guanylate kinase family.

Its subcellular location is the cytoplasm. The catalysed reaction is GMP + ATP = GDP + ADP. In terms of biological role, essential for recycling GMP and indirectly, cGMP. The polypeptide is Guanylate kinase (Vibrio vulnificus (strain CMCP6)).